A 375-amino-acid chain; its full sequence is MADNAHLRGTGVVQQENNGFGPLSKRRGNTATVTSAIVFVISGALLLLAVRKEKATSEGIHFLVFTAALLTLSFVLGELVRRFCLVSEELKHRHARYQGNWKGVLKTTFTFDNAGSILVVAISSALTLCFVLYEQYEAFSGPGYPILFFLNCLVVPQLSFLVGLRQLSPVETSDLNEKENKNVADGLAWSYYFGYLKLVLPRLGDRIAESDTYRHKITVEKLFILLPKTCYTFDAITKADPRVKWAGKLPASKINRAGILERSYQHAVHRIEMPLPDGTVEEYHFVLEYATPLMSLYEMSDHAKAPLTGPERDHQVVLFIRKLKEILDDSEECRGKYELVPISGNDTNKIADVLVGMHGAASIDLEDETDEQTKQ.

Helical transmembrane passes span 30–50, 60–80, 114–134, and 144–164; these read TATV…LLAV, IHFL…GELV, AGSI…VLYE, and YPIL…LVGL. 3 residues coordinate 2',3'-cGAMP: Y195, R256, and R262.

It belongs to the STING family.

Its subcellular location is the membrane. In terms of biological role, facilitator of innate immune signaling that acts as a sensor of second messenger signals produced by cyclic GMP-AMP synthase-like receptors (cGLRs) and promotes the production of type I interferon. Innate immune response is triggered in response to nucleotides from viruses and bacteria delivered to the cytoplasm. Acts by binding cyclic dinucleotides: recognizes and binds 2'-3' linked cGAMP (2'-3'-cGAMP), a second messengers produced by cGLRs in response to nucleotides in the cytosol, such as double-stranded RNA (dsRNA). Upon binding to 2'-3'-cGAMP, oligomerizes and promotes the recruitment and subsequent activation of the transcription factor IRF3 to induce expression of type I interferon. In Stylophora pistillata (Smooth cauliflower coral), this protein is Stimulator of interferon genes protein 2.